A 334-amino-acid polypeptide reads, in one-letter code: Leucine-rich repeat-containing protein 26 (334 aa).

The N-terminal stretch at Met-1–Thr-30 is a signal peptide. Topologically, residues Gln-31–Asp-265 are extracellular. Positions Pro-38–Trp-75 constitute an LRRNT domain. Intrachain disulfides connect Cys-47–Cys-53 and Cys-51–Cys-61. 5 LRR repeats span residues Gln-76–Asp-97, Ala-100–Gly-121, Val-124–Pro-145, Ala-148–Pro-169, and Leu-172–Leu-194. The LRRCT domain maps to Asn-205–Gln-259. Disulfide bonds link Cys-209–Cys-235 and Cys-211–Cys-257. Residues Leu-266 to Ala-286 traverse the membrane as a helical segment. Over Leu-287–Ala-334 the chain is Cytoplasmic. The interval Gln-312–Ala-334 is disordered.

In terms of assembly, interacts with KCNMA1.

It is found in the cell membrane. It localises to the cytoplasm. The protein resides in the cytoskeleton. Its function is as follows. Auxiliary protein of the large-conductance, voltage and calcium-activated potassium channel (BK alpha). Required for the conversion of BK alpha channels from a high-voltage to a low-voltage activated channel type in non-excitable cells. These are characterized by negative membrane voltages and constant low levels of calcium. The protein is Leucine-rich repeat-containing protein 26 (Lrrc26) of Rattus norvegicus (Rat).